The chain runs to 299 residues: Fibrinogen silencer-binding protein (299 aa).

K94 participates in a covalent cross-link: Glycyl lysine isopeptide (Lys-Gly) (interchain with G-Cter in SUMO2). The disordered stretch occupies residues 189-211; it reads EGSESPSLSSVDMRMTSSPSSVP. The segment covering 192-209 has biased composition (polar residues); sequence ESPSLSSVDMRMTSSPSS.

In terms of assembly, interacts with APBA1 (via PDZ 1 and 2 domains).

It is found in the nucleus. In terms of biological role, transcriptional repressor that down-regulates the expression of the fibrinogen gamma chain. Represses transcription of GSK3B gene promoter via its interaction with APBA1. This Mus musculus (Mouse) protein is Fibrinogen silencer-binding protein (Fsbp).